The following is a 170-amino-acid chain: Ribosome maturation factor RimM (170 aa).

Residues 97 to 170 form the PRC barrel domain; sequence KPDEYYWVDL…LVVVDWDPEF (74 aa).

Belongs to the RimM family. Binds ribosomal protein uS19.

The protein resides in the cytoplasm. Functionally, an accessory protein needed during the final step in the assembly of 30S ribosomal subunit, possibly for assembly of the head region. Essential for efficient processing of 16S rRNA. May be needed both before and after RbfA during the maturation of 16S rRNA. It has affinity for free ribosomal 30S subunits but not for 70S ribosomes. The chain is Ribosome maturation factor RimM from Stenotrophomonas maltophilia (strain K279a).